Here is a 699-residue protein sequence, read N- to C-terminus: Elongation factor G (699 aa).

Positions 8-286 constitute a tr-type G domain; the sequence is EKLRNIGIVA…AVIVTYPLPI (279 aa). GTP contacts are provided by residues 17-24, 84-88, and 138-141; these read AHIDAGKT, DTPGH, and NKMD.

This sequence belongs to the TRAFAC class translation factor GTPase superfamily. Classic translation factor GTPase family. EF-G/EF-2 subfamily.

It is found in the cytoplasm. In terms of biological role, catalyzes the GTP-dependent ribosomal translocation step during translation elongation. During this step, the ribosome changes from the pre-translocational (PRE) to the post-translocational (POST) state as the newly formed A-site-bound peptidyl-tRNA and P-site-bound deacylated tRNA move to the P and E sites, respectively. Catalyzes the coordinated movement of the two tRNA molecules, the mRNA and conformational changes in the ribosome. The chain is Elongation factor G (fusA) from Aquifex pyrophilus.